Consider the following 447-residue polypeptide: Probable ribosomal RNA small subunit methyltransferase B (447 aa).

S-adenosyl-L-methionine-binding positions include 259-265, D283, D310, and D329; that span reads CAAPGGK. The active-site Nucleophile is the C382.

The protein belongs to the class I-like SAM-binding methyltransferase superfamily. RsmB/NOP family.

The protein localises to the cytoplasm. It carries out the reaction cytidine(967) in 16S rRNA + S-adenosyl-L-methionine = 5-methylcytidine(967) in 16S rRNA + S-adenosyl-L-homocysteine + H(+). Its function is as follows. Specifically methylates the cytosine at position 967 (m5C967) of 16S rRNA. The sequence is that of Probable ribosomal RNA small subunit methyltransferase B from Bacillus subtilis (strain 168).